We begin with the raw amino-acid sequence, 368 residues long: Peptide chain release factor 2 (368 aa).

Q249 is modified (N5-methylglutamine).

Belongs to the prokaryotic/mitochondrial release factor family. Methylated by PrmC. Methylation increases the termination efficiency of RF2.

It localises to the cytoplasm. Functionally, peptide chain release factor 2 directs the termination of translation in response to the peptide chain termination codons UGA and UAA. This Rhodococcus jostii (strain RHA1) protein is Peptide chain release factor 2.